The primary structure comprises 226 residues: N-(5'-phosphoribosyl)anthranilate isomerase (226 aa).

This sequence belongs to the TrpF family.

The catalysed reaction is N-(5-phospho-beta-D-ribosyl)anthranilate = 1-(2-carboxyphenylamino)-1-deoxy-D-ribulose 5-phosphate. It participates in amino-acid biosynthesis; L-tryptophan biosynthesis; L-tryptophan from chorismate: step 3/5. The protein is N-(5'-phosphoribosyl)anthranilate isomerase (TRP1) of Saccharomyces kudriavzevii (strain ATCC MYA-4449 / AS 2.2408 / CBS 8840 / NBRC 1802 / NCYC 2889) (Yeast).